Consider the following 533-residue polypeptide: (E)-beta-farnesene synthase (533 aa).

Residues Asp-286, Asp-290, Asn-430, Ser-434, and Glu-438 each contribute to the Mg(2+) site. The short motif at 286–290 (DDMMD) is the DDXXD motif element.

Belongs to the terpene synthase family. Requires Mg(2+) as cofactor. Co(2+) is required as a cofactor. Mn(2+) serves as cofactor.

It localises to the cytoplasm. The catalysed reaction is (2E,6E)-farnesyl diphosphate = (E)-beta-farnesene + diphosphate. Its pathway is secondary metabolite biosynthesis; terpenoid biosynthesis. Its function is as follows. Sesquiterpene cyclase catalyzing the production of beta-farnesene and alpha-bergamotene in equal amounts from farnesyl diphosphate. Involved in indirect defense by producing volatile signals attracting natural enemies of herbivores. This chain is (E)-beta-farnesene synthase, found in Zea mays subsp. huehuetenangensis (San Antonio Huista teosinte).